A 137-amino-acid polypeptide reads, in one-letter code: Large ribosomal subunit protein uL22 (137 aa).

It belongs to the universal ribosomal protein uL22 family. As to quaternary structure, part of the 50S ribosomal subunit.

Functionally, this protein binds specifically to 23S rRNA; its binding is stimulated by other ribosomal proteins, e.g. L4, L17, and L20. It is important during the early stages of 50S assembly. It makes multiple contacts with different domains of the 23S rRNA in the assembled 50S subunit and ribosome. In terms of biological role, the globular domain of the protein is located near the polypeptide exit tunnel on the outside of the subunit, while an extended beta-hairpin is found that lines the wall of the exit tunnel in the center of the 70S ribosome. The polypeptide is Large ribosomal subunit protein uL22 (Flavobacterium johnsoniae (strain ATCC 17061 / DSM 2064 / JCM 8514 / BCRC 14874 / CCUG 350202 / NBRC 14942 / NCIMB 11054 / UW101) (Cytophaga johnsonae)).